The sequence spans 602 residues: (R)-limonene synthase (602 aa).

The Mg(2+) site is built by Asp356, Asp360, Asp500, Thr504, and Glu508. The short motif at 356–360 (DDVYD) is the DDXXD motif element.

Belongs to the terpene synthase family. The cofactor is Mg(2+). Requires Mn(2+) as cofactor.

The enzyme catalyses (2E)-geranyl diphosphate = (4R)-limonene + diphosphate. Catalyzes the formation of (R)-(+)-limonene, terpinolene, (1R,5S)-(+)-camphene, (1R,5R)-(+)-alpha-pinene, beta-myrcene and traces of alpha-phellandrene. This is (R)-limonene synthase from Lavandula angustifolia (Lavender).